Reading from the N-terminus, the 172-residue chain is Protein GrpE (172 aa).

This sequence belongs to the GrpE family. In terms of assembly, homodimer.

The protein resides in the cytoplasm. Participates actively in the response to hyperosmotic and heat shock by preventing the aggregation of stress-denatured proteins, in association with DnaK and GrpE. It is the nucleotide exchange factor for DnaK and may function as a thermosensor. Unfolded proteins bind initially to DnaJ; upon interaction with the DnaJ-bound protein, DnaK hydrolyzes its bound ATP, resulting in the formation of a stable complex. GrpE releases ADP from DnaK; ATP binding to DnaK triggers the release of the substrate protein, thus completing the reaction cycle. Several rounds of ATP-dependent interactions between DnaJ, DnaK and GrpE are required for fully efficient folding. In Thermotoga sp. (strain RQ2), this protein is Protein GrpE.